Reading from the N-terminus, the 342-residue chain is Thiosulfate/3-mercaptopyruvate sulfurtransferase 2 (342 aa).

2 consecutive Rhodanese domains span residues Gly56–Ser173 and Glu224–Val338. The active-site Cysteine persulfide intermediate is the Cys298.

As to expression, expressed in roots, rosette and cauline leaves, stems, flowers and siliques.

It is found in the cytoplasm. The catalysed reaction is thiosulfate + hydrogen cyanide = thiocyanate + sulfite + 2 H(+). It carries out the reaction 2-oxo-3-sulfanylpropanoate + [thioredoxin]-dithiol = [thioredoxin]-disulfide + hydrogen sulfide + pyruvate + H(+). Functionally, catalyzes the transfer of a sulfur ion from a donor to cyanide or to other thiol compounds. Substrate preference is 3-mercaptopyruvate &gt; thiosulfate. Involved in embryo and seed development. The polypeptide is Thiosulfate/3-mercaptopyruvate sulfurtransferase 2 (STR2) (Arabidopsis thaliana (Mouse-ear cress)).